The chain runs to 309 residues: Non-homologous end-joining factor 1 (309 aa).

The segment at 1–134 is globular head; it reads MEAVLSALPW…TPVAVVCRQL (134 aa). Residues 223–298 are C-terminal tail; it reads GKTGRKRKHS…AGSEDRSTSR (76 aa). Residues 223–309 form a disordered region; it reads GKTGRKRKHS…KKKKAVGLFR (87 aa). Residues 243–252 are compositionally biased toward basic and acidic residues; that stretch reads HITDHQHISE. 2 stretches are compositionally biased toward polar residues: residues 253-265 and 273-290; these read STDVGPSLASQEH and RSQVANSQQTLPLSSTAG. Positions 297–309 are enriched in basic residues; it reads SRAKKKKAVGLFR. Positions 299–309 match the XLM motif; sequence AKKKKAVGLFR.

Belongs to the XRCC4-XLF family. XLF subfamily. As to quaternary structure, homodimer. Interacts with xrcc4; the interaction is direct and is mediated via a head-to-head interaction between N-terminal head regions. Component of the core long-range non-homologous end joining (NHEJ) complex (also named DNA-PK complex) composed of prkdc/DNA-PKcs, lig4, xrcc4, xrcc6/Ku70, xrcc5/Ku80 and nhej1/xlf.

The protein localises to the nucleus. It is found in the chromosome. Functionally, DNA repair protein involved in DNA non-homologous end joining (NHEJ); it is required for double-strand break (DSB) repair and V(D)J recombination and is also involved in telomere maintenance. Plays a key role in NHEJ by promoting the ligation of various mismatched and non-cohesive ends. In some studies, has been shown to associate with xrcc4 to form alternating helical filaments that bridge DNA and act like a bandage, holding together the broken DNA until it is repaired. Alternatively, it has also been shown that rather than forming filaments, a single nhej1 dimer interacts through both head domains with xrcc4 to promote the close alignment of DNA ends. The xrcc4-nhej1/xlf subcomplex binds to the DNA fragments of a DSB in a highly diffusive manner and robustly bridges two independent DNA molecules, holding the broken DNA fragments in close proximity to one other. The mobility of the bridges ensures that the ends remain accessible for further processing by other repair factors. This is Non-homologous end-joining factor 1 (nhej1) from Danio rerio (Zebrafish).